The chain runs to 386 residues: CRISPR system endoribonuclease Csm6' (386 aa).

The CARF domain stretch occupies residues 1 to 146 (MRVLISAVGD…ASNENIGHDN (146 aa)). Residues 147–386 (DENIDELIEV…LNKILLTKLN (240 aa)) form an HEPN domain region.

The protein belongs to the CRISPR-associated Csm6 family. In terms of assembly, homodimer. The composite ssRNase active site is formed at the dimer interface.

Non-specific ssRNase activity is stimulated about 1000-fold by cyclic oligoadenylate (cOA), a second messenger produced by Cas10 of the ternary Csm effector complex in the presence of a cognate target RNA. CRISPR (clustered regularly interspaced short palindromic repeat) is an adaptive immune system that provides protection against mobile genetic elements (viruses, transposable elements and conjugative plasmids). CRISPR clusters contain spacers, sequences complementary to antecedent mobile elements, and target invading nucleic acids. CRISPR clusters are transcribed and processed into CRISPR RNA (crRNA). The type III-A Csm complex binds crRNA and acts as a crRNA-guided RNase, DNase and cyclic oligoadenylate synthase; binding of target RNA cognate to the crRNA is required for all activities. In a heterologous host this Csm effector complex restricts ssRNA phage MS2, suggesting it may target RNA viruses in vivo. This protein is not part of the Csm complex. Its function is as follows. Csm functions as a non-specific ssDNase. Base-pairing between crRNA and target RNA to form a ternary Csm complex activates a ssDNase activity; target RNA cleavage suppresses the ssDNase, a temporal control that prevents uncontrolled DNA degradation. Viral RNA transcripts probably tether the Csm complex to the viral genome, recruiting Cas10 ssDNA activity which is able to degrade DNA in the transcription bubble, spatially controlling the DNase activity. In terms of biological role, a single-strand-specific endoribonuclease (ssRNase) that is approximately 1000-fold stimulated by cyclic oligoadenylate (cOA); although several species of cOA are synthesized by this organism only cyclic hexaadenylate (cA6) stimulates the ssRNase activity. Cleaves preferentially within GA or AA dinucleotides, although the presence of cA6 broadens the preference. In Streptococcus thermophilus, this protein is CRISPR system endoribonuclease Csm6'.